A 464-amino-acid chain; its full sequence is MDFCFMIFYNSLSGQKEQFKPIEANKIKMYACGVTVYDDCHIGHARTYIAFDVINRYFKYRGYDVTLVRNITDIDDKIIKRANENGESTTELVERNIKAMHDVFARLNILKPSKEPRATETIPEMVAMIETLIKKGYAYQGANSDVFYRVTKFADYGKLSKQNLEALQQGSRVDVVEEKENPMDFVLWKMAKEGEPAWDSPWGAGRPGWHIECSAMSKKLLGDTFDIHAGGSDLRFPHHENEIAQSEACNECTFANYWLHSGMVKVNAEKMSKSLNNFFTIVEVLEEYHPEVVRYFLASTVYRSEINYSKENLENAKASVERLFNALRDIEPIEVNLPDDASEYEEKFIKAMDNDFNTPEALAVLFSLAKEINTLKTTNKYKASGYAYLLRKLCDVLGILFTDIEEYFKQGDGADASEIEKLIAERTQAKKDKNYVRADEIRNQLQQQGIILEDSATGTTWKKG.

Cysteine 32 provides a ligand contact to Zn(2+). The 'HIGH' region signature appears at 34 to 44 (VTVYDDCHIGH). 3 residues coordinate Zn(2+): cysteine 213, histidine 238, and glutamate 242. The 'KMSKS' region motif lies at 270-274 (KMSKS). Residue lysine 273 participates in ATP binding.

This sequence belongs to the class-I aminoacyl-tRNA synthetase family. In terms of assembly, monomer. Requires Zn(2+) as cofactor.

The protein localises to the cytoplasm. It catalyses the reaction tRNA(Cys) + L-cysteine + ATP = L-cysteinyl-tRNA(Cys) + AMP + diphosphate. The chain is Cysteine--tRNA ligase from Francisella tularensis subsp. tularensis (strain SCHU S4 / Schu 4).